The following is a 294-amino-acid chain: 33 kDa chaperonin (294 aa).

Cystine bridges form between Cys238/Cys240 and Cys271/Cys274.

This sequence belongs to the HSP33 family. Under oxidizing conditions two disulfide bonds are formed involving the reactive cysteines. Under reducing conditions zinc is bound to the reactive cysteines and the protein is inactive.

It is found in the cytoplasm. Its function is as follows. Redox regulated molecular chaperone. Protects both thermally unfolding and oxidatively damaged proteins from irreversible aggregation. Plays an important role in the bacterial defense system toward oxidative stress. The sequence is that of 33 kDa chaperonin from Clostridium novyi (strain NT).